Consider the following 1013-residue polypeptide: MVVDFCRRFVARSLCIILMKHFCSSSVSEDLGCRRGDFSRKHYGSVELLISSDADGAIQRAGRFRVENGSSDENATALPGTWRRTDVHLENPEYHTRWYFKYFLGQVHQNYIGNDAEKSPFFLSVTLSDQNNQRVPQYRAILWRKTGTQKICLPYSPTKTLSVKSILSAMNLDKFEKGPREIFHPEIQKDLLVLEEQEGSVNFKFGVLFAKDGQLTDDEMFSNEIGSEPFQKFLNLLGDTITLKGWTGYRGGLDTKNDTTGIHSVYTVYQGHEIMFHVSTMLPYSKENKQQVERKRHIGNDIVTIVFQEGEESSPAFKPSMIRSHFTHIFALVRYNQQNDNYRLKIFSEESVPLFGPPLPTPPVFTDHQEFRDFLLVKLINGEKATLETPTFAQKRRRTLDMLIRSLHQDLMPDLHKNMLNRRSFSDVLPESPKSARKKEEARQAEFVRIGQALKLKSIVRGDAPSSLAASGICKKEPWEPQCFCSNFPHEAVCADPWGQALLVSTDAGVLLVDDDLPSVPVFDRTLPVKQMHVLETLDLLVLRADKGKDARLFVFRLSALQKGLEGKQAGKSRSDCRENKLEKTKGCHLYAINTHHSRELRIVVAIRNKLLLITRKHNKPSGVTSTSLLSPLSESPVEEFQYIREICLSDSPMVMTLVDGPAEESDNLICVAYRHQFDVVNESTGEAFRLHHVEANRVNFVAAIDVYEDGEAGLLLCYNYSCIYKKVCPFNGGSFLVQPSASDFQFCWNQAPYAIVCAFPYLLAFTTDSMEIRLVVNGNLVHTAVVPQLQLVASRSDIYFTATAAVNEVSSGGSSKGASARNSPQTPPGRDTPVFPSSLGEGEIQSKNLYKIPLRNLVGRSIERPLKSPLVSKVITPPTPISVGLAAIPVTHSLSLSRMEIKEIASRTRRELLGLSDEGGPKSEGAPKAKSKPRKRLEESQGGPKPGAVRSSSSDRIPSGSLESASTSEANPEGHSASSDQDPVADREGSPVSGSSPFQLTAFSDEDIIDLK.

Position 45 is a phosphoserine (Ser-45). A Rap-GAP domain is found at 191–407; the sequence is LLVLEEQEGS…RTLDMLIRSL (217 aa). A phosphoserine mark is found at Ser-426 and Ser-432. In terms of domain architecture, CNH spans 489–800; it reads PHEAVCADPW…QLVASRSDIY (312 aa). Disordered stretches follow at residues 810–842 and 913–1013; these read VSSG…SLGE and LLGL…IDLK. Low complexity predominate over residues 811–821; it reads SSGGSSKGASA. At Thr-827 the chain carries Phosphothreonine. Low complexity predominate over residues 952 to 962; that stretch reads SSSSDRIPSGS. 2 stretches are compositionally biased toward polar residues: residues 963-982 and 993-1003; these read LESA…SSDQ and VSGSSPFQLTA.

This sequence belongs to the GARNL3 family.

The sequence is that of GTPase-activating Rap/Ran-GAP domain-like protein 3 (GARNL3) from Homo sapiens (Human).